The sequence spans 794 residues: LPS-assembly protein LptD (794 aa).

The signal sequence occupies residues 1-31 (MPSHCSSLLCARFRLSSLAVIVALAASGVRA).

The protein belongs to the LptD family. In terms of assembly, component of the lipopolysaccharide transport and assembly complex. Interacts with LptE and LptA.

The protein localises to the cell outer membrane. In terms of biological role, together with LptE, is involved in the assembly of lipopolysaccharide (LPS) at the surface of the outer membrane. The protein is LPS-assembly protein LptD of Marinobacter nauticus (strain ATCC 700491 / DSM 11845 / VT8) (Marinobacter aquaeolei).